The chain runs to 176 residues: Late embryogenesis abundant protein 49 (176 aa).

SMP domains lie at 49–106 (TTLT…RNQK) and 115–171 (NLGD…KLNH).

Belongs to the LEA type SMP family.

It localises to the cytoplasm. Its subcellular location is the nucleus. Its function is as follows. LEA proteins are late embryonic proteins abundant in higher plant seed embryos. The function of those proteins is not known. In Arabidopsis thaliana (Mouse-ear cress), this protein is Late embryogenesis abundant protein 49.